A 585-amino-acid chain; its full sequence is ADP-ribosylation factor-binding protein GGA2 (585 aa).

The 137-residue stretch at 33-169 folds into the VHS domain; it reads ACRMSLAEPD…LLKYKGYAFP (137 aa). Glycyl lysine isopeptide (Lys-Gly) (interchain with G-Cter in ubiquitin) cross-links involve residues Lys180 and Lys287. The 126-residue stretch at 196 to 321 folds into the GAT domain; the sequence is EIAQAAKLEE…LLEKFNLLKN (126 aa). A disordered region spans residues 358-378; sequence LDEAPSQGNNNTNGTGTPAAA. A compositionally biased stretch (low complexity) spans 365 to 374; sequence GNNNTNGTGT. In terms of domain architecture, GAE spans 466–581; sequence TTTAPARTLV…TQAEETAVFT (116 aa).

Binds to ARF1 and ARF2.

Its subcellular location is the golgi apparatus. It is found in the trans-Golgi network. Its function is as follows. May play a role in the regulation of membrane traffic through the trans-Golgi network. The chain is ADP-ribosylation factor-binding protein GGA2 (GGA2) from Saccharomyces cerevisiae (strain ATCC 204508 / S288c) (Baker's yeast).